The chain runs to 24 residues: Brevinin-1JDc (24 aa).

An intrachain disulfide couples cysteine 18 to cysteine 24.

In terms of tissue distribution, expressed by the skin glands.

The protein localises to the secreted. Its function is as follows. Has antibacterial activity against E.coli ATCC 25992 (MIC=49 uM), E.coli CIB 84492 (MIC=25 uM), S.aureus ATCC 25923 (MIC=6 uM) and S.aureus CIB 85462 (MIC=3 uM). The protein is Brevinin-1JDc of Odorrana jingdongensis (Jingdong frog).